The following is a 171-amino-acid chain: GTP-dependent dephospho-CoA kinase (171 aa).

Residues D49, V51, D68, and E122 each coordinate GTP.

This sequence belongs to the GTP-dependent DPCK family.

The enzyme catalyses 3'-dephospho-CoA + GTP = GDP + CoA + H(+). The protein operates within cofactor biosynthesis; coenzyme A biosynthesis. Its function is as follows. Catalyzes the GTP-dependent phosphorylation of the 3'-hydroxyl group of dephosphocoenzyme A to form coenzyme A (CoA). The protein is GTP-dependent dephospho-CoA kinase of Hyperthermus butylicus (strain DSM 5456 / JCM 9403 / PLM1-5).